The primary structure comprises 378 residues: C-C chemokine receptor type 7 (378 aa).

A signal peptide spans 1–24 (MDLGKPMKSVLVVALLVIFQVCLC). Over 25–59 (QDEVTDDYIGDNTTVDYTLFESLCSKKDVRNFKAW) the chain is Extracellular. An N-linked (GlcNAc...) asparagine glycan is attached at Asn-36. Residues 60 to 86 (FLPIMYSIICFVGLLGNGLVVLTYIYF) form a helical membrane-spanning segment. Residues 87-95 (KRLKTMTDT) are Cytoplasmic-facing. Residues 96–116 (YLLNLAVADILFLLTLPFWAY) form a helical membrane-spanning segment. Residues 117 to 130 (SAAKSWVFGVHFCK) lie on the Extracellular side of the membrane. Cys-129 and Cys-210 are disulfide-bonded. A helical membrane pass occupies residues 131 to 152 (LIFAIYKMSFFSGMLLLLCISI). Residues 153–170 (DRYVAIVQAVSAHRHRAR) lie on the Cytoplasmic side of the membrane. Residues 171 to 191 (VLLISKLSCVGIWILATVLSI) traverse the membrane as a helical segment. At 192 to 219 (PELLYSDLQRSSSEQAMRCSLITEHVEA) the chain is on the extracellular side. The helical transmembrane segment at 220-247 (FITIQVAQMVIGFLVPLLAMSFCYLVII) threads the bilayer. Over 248 to 263 (RTLLQARNFERNKAIK) the chain is Cytoplasmic. A helical transmembrane segment spans residues 264 to 289 (VIIAVVVVFIVFQLPYNGVVLAQTVA). Residues 290 to 313 (NFNITSSTCELSKQLNIAYDVTYS) are Extracellular-facing. Residues 314–331 (LACVRCCVNPFLYAFIGV) form a helical membrane-spanning segment. Residues 332 to 378 (KFRNDLFKLFKDLGCLSQEQLRQWSSCRHIRRSSMSVEAETTTTFSP) are Cytoplasmic-facing.

This sequence belongs to the G-protein coupled receptor 1 family. As to expression, expressed in various lymphoid tissues and activated B- and T-lymphocytes, strongly up-regulated in B-cells infected with Epstein-Barr virus and T-cells infected with herpesvirus 6 or 7.

It localises to the cell membrane. Functionally, receptor for the MIP-3-beta chemokine. Probable mediator of EBV effects on B-lymphocytes or of normal lymphocyte functions. This is C-C chemokine receptor type 7 (CCR7) from Homo sapiens (Human).